The following is a 237-amino-acid chain: Ribosomal RNA small subunit methyltransferase G (237 aa).

Residues G76, F81, V128 to E129, and R147 contribute to the S-adenosyl-L-methionine site.

It belongs to the methyltransferase superfamily. RNA methyltransferase RsmG family.

It localises to the cytoplasm. Functionally, specifically methylates the N7 position of a guanine in 16S rRNA. The protein is Ribosomal RNA small subunit methyltransferase G of Prochlorococcus marinus (strain MIT 9215).